Consider the following 198-residue polypeptide: Phosphoheptose isomerase (198 aa).

Positions 36–198 (MIGSLLNNGK…DCLLLGVEDQ (163 aa)) constitute an SIS domain. 51-53 (NGG) is a substrate binding site. 2 residues coordinate Zn(2+): H60 and E64. Substrate-binding positions include E64, 93–94 (ND), 119–121 (STS), S124, and Q174. Positions 174 and 182 each coordinate Zn(2+).

Belongs to the SIS family. GmhA subfamily. In terms of assembly, homotetramer. Requires Zn(2+) as cofactor.

The protein localises to the cytoplasm. The catalysed reaction is 2 D-sedoheptulose 7-phosphate = D-glycero-alpha-D-manno-heptose 7-phosphate + D-glycero-beta-D-manno-heptose 7-phosphate. It functions in the pathway carbohydrate biosynthesis; D-glycero-D-manno-heptose 7-phosphate biosynthesis; D-glycero-alpha-D-manno-heptose 7-phosphate and D-glycero-beta-D-manno-heptose 7-phosphate from sedoheptulose 7-phosphate: step 1/1. Its function is as follows. Catalyzes the isomerization of sedoheptulose 7-phosphate in D-glycero-D-manno-heptose 7-phosphate. In Aromatoleum aromaticum (strain DSM 19018 / LMG 30748 / EbN1) (Azoarcus sp. (strain EbN1)), this protein is Phosphoheptose isomerase.